The primary structure comprises 454 residues: Pup--protein ligase (454 aa).

Residue glutamate 9 participates in Mg(2+) binding. Position 53 (arginine 53) interacts with ATP. Tyrosine 55 serves as a coordination point for Mg(2+). The Proton acceptor role is filled by aspartate 57. Glutamate 63 contributes to the Mg(2+) binding site. Residues threonine 66 and tryptophan 420 each contribute to the ATP site.

This sequence belongs to the Pup ligase/Pup deamidase family. Pup-conjugating enzyme subfamily.

The enzyme catalyses ATP + [prokaryotic ubiquitin-like protein]-L-glutamate + [protein]-L-lysine = ADP + phosphate + N(6)-([prokaryotic ubiquitin-like protein]-gamma-L-glutamyl)-[protein]-L-lysine.. Its pathway is protein degradation; proteasomal Pup-dependent pathway. The protein operates within protein modification; protein pupylation. Functionally, catalyzes the covalent attachment of the prokaryotic ubiquitin-like protein modifier Pup to the proteasomal substrate proteins, thereby targeting them for proteasomal degradation. This tagging system is termed pupylation. The ligation reaction involves the side-chain carboxylate of the C-terminal glutamate of Pup and the side-chain amino group of a substrate lysine. The protein is Pup--protein ligase of Pseudarthrobacter chlorophenolicus (strain ATCC 700700 / DSM 12829 / CIP 107037 / JCM 12360 / KCTC 9906 / NCIMB 13794 / A6) (Arthrobacter chlorophenolicus).